The following is a 110-amino-acid chain: PHD finger-like domain-containing protein 5B (110 aa).

Belongs to the PHF5 family.

The sequence is that of PHD finger-like domain-containing protein 5B from Arabidopsis thaliana (Mouse-ear cress).